The primary structure comprises 226 residues: RLA class II histocompatibility antigen, DP alpha-1 chain (226 aa).

The Extracellular portion of the chain corresponds to 1 to 189 (EHVSVFVIFA…PIQMPETTET (189 aa)). Residues N75 and N115 are each glycosylated (N-linked (GlcNAc...) asparagine). The 93-residue stretch at 84-176 (PEVIVFPKEP…LDAPLLTHWE (93 aa)) folds into the Ig-like C1-type domain. C104 and C160 are oxidised to a cystine. The helical transmembrane segment at 190 to 210 (VVCALGLVVGLAGVVVGIVLI) threads the bilayer. Residues 211–226 (TKALRSSPDPRARRPL) lie on the Cytoplasmic side of the membrane.

The protein belongs to the MHC class II family.

Its subcellular location is the membrane. This Oryctolagus cuniculus (Rabbit) protein is RLA class II histocompatibility antigen, DP alpha-1 chain.